Here is a 347-residue protein sequence, read N- to C-terminus: D-alanine--D-alanine ligase (347 aa).

One can recognise an ATP-grasp domain in the interval 134–332 (KLYAKDLGVK…LAQSLPKTPK (199 aa)). 161-216 (LIGFNFPFIIKPSNAGSSLGVSVVKEEKELIYALDGAFEYSKEILIEPFIQGVKEY) contacts ATP. The Mg(2+) site is built by aspartate 288, glutamate 300, and asparagine 302.

This sequence belongs to the D-alanine--D-alanine ligase family. Mg(2+) serves as cofactor. It depends on Mn(2+) as a cofactor.

The protein localises to the cytoplasm. The enzyme catalyses 2 D-alanine + ATP = D-alanyl-D-alanine + ADP + phosphate + H(+). It functions in the pathway cell wall biogenesis; peptidoglycan biosynthesis. Its function is as follows. Cell wall formation. The chain is D-alanine--D-alanine ligase from Helicobacter pylori (strain Shi470).